Consider the following 201-residue polypeptide: L-rhamnose-binding lectin SML (201 aa).

8 disulfide bridges follow: cysteine 10–cysteine 40, cysteine 20–cysteine 99, cysteine 54–cysteine 86, cysteine 67–cysteine 73, cysteine 108–cysteine 138, cysteine 117–cysteine 195, cysteine 152–cysteine 182, and cysteine 163–cysteine 169. SUEL-type lectin domains lie at 18-100 and 107-196; these read LSCD…YNCF and TCEH…YVCQ. Asparagine 168 carries an N-linked (GlcNAc...) asparagine glycan.

Homodimer; non-covalently linked.

Functionally, rhamnose-binding lectin. Also binds melibiose, raffinose, D-galactose, L-arabinose, D-fucose, maltose and D-glucose with decreasing affinity. Does not bind D-arabinose, L-fucose, lactose, xylose or 2-deoxy-D-galactose. Shows strong hemagglutinating activity against rabbit erythrocytes. The chain is L-rhamnose-binding lectin SML from Scomberomorus niphonius (Japanese Spanish mackerel).